Consider the following 468-residue polypeptide: Probable Xaa-Pro aminopeptidase PEPP (468 aa).

4 residues coordinate Mn(2+): Asp-264, Asp-275, Glu-398, and Glu-438.

It belongs to the peptidase M24B family. Mn(2+) serves as cofactor.

The catalysed reaction is Release of any N-terminal amino acid, including proline, that is linked to proline, even from a dipeptide or tripeptide.. Catalyzes the removal of a penultimate prolyl residue from the N-termini of peptides. This is Probable Xaa-Pro aminopeptidase PEPP (PEPP) from Paracoccidioides brasiliensis (strain Pb18).